The sequence spans 221 residues: Phosphoribosylformylglycinamidine synthase subunit PurQ (221 aa).

A Glutamine amidotransferase type-1 domain is found at 2 to 221; it reads NVGVIVFPGS…FAGLLEPVAA (220 aa). The active-site Nucleophile is Cys86. Active-site residues include His194 and Glu196.

As to quaternary structure, part of the FGAM synthase complex composed of 1 PurL, 1 PurQ and 2 PurS subunits.

It localises to the cytoplasm. It catalyses the reaction N(2)-formyl-N(1)-(5-phospho-beta-D-ribosyl)glycinamide + L-glutamine + ATP + H2O = 2-formamido-N(1)-(5-O-phospho-beta-D-ribosyl)acetamidine + L-glutamate + ADP + phosphate + H(+). It carries out the reaction L-glutamine + H2O = L-glutamate + NH4(+). The protein operates within purine metabolism; IMP biosynthesis via de novo pathway; 5-amino-1-(5-phospho-D-ribosyl)imidazole from N(2)-formyl-N(1)-(5-phospho-D-ribosyl)glycinamide: step 1/2. In terms of biological role, part of the phosphoribosylformylglycinamidine synthase complex involved in the purines biosynthetic pathway. Catalyzes the ATP-dependent conversion of formylglycinamide ribonucleotide (FGAR) and glutamine to yield formylglycinamidine ribonucleotide (FGAM) and glutamate. The FGAM synthase complex is composed of three subunits. PurQ produces an ammonia molecule by converting glutamine to glutamate. PurL transfers the ammonia molecule to FGAR to form FGAM in an ATP-dependent manner. PurS interacts with PurQ and PurL and is thought to assist in the transfer of the ammonia molecule from PurQ to PurL. The sequence is that of Phosphoribosylformylglycinamidine synthase subunit PurQ from Synechococcus sp. (strain ATCC 27144 / PCC 6301 / SAUG 1402/1) (Anacystis nidulans).